A 284-amino-acid polypeptide reads, in one-letter code: L-ribulose-5-phosphate 3-epimerase UlaE (284 aa).

Belongs to the L-ribulose-5-phosphate 3-epimerase family.

The catalysed reaction is L-ribulose 5-phosphate = L-xylulose 5-phosphate. It functions in the pathway cofactor degradation; L-ascorbate degradation; D-xylulose 5-phosphate from L-ascorbate: step 3/4. Its function is as follows. Catalyzes the isomerization of L-xylulose-5-phosphate to L-ribulose-5-phosphate. Is involved in the anaerobic L-ascorbate utilization. The chain is L-ribulose-5-phosphate 3-epimerase UlaE from Salmonella choleraesuis (strain SC-B67).